The following is a 318-amino-acid chain: HPr kinase/phosphorylase (318 aa).

Catalysis depends on residues His146 and Lys167. 161–168 lines the ATP pocket; it reads GESGLGKS. Ser168 contacts Mg(2+). Residue Asp185 is the Proton acceptor; for phosphorylation activity. Proton donor; for dephosphorylation activity of the active site. The important for the catalytic mechanism of both phosphorylation and dephosphorylation stretch occupies residues 209–218; that stretch reads LEVRGIGLLD. A Mg(2+)-binding site is contributed by Glu210. Residue Arg252 is part of the active site. The important for the catalytic mechanism of dephosphorylation stretch occupies residues 273–278; that stretch reads QVVAGR.

It belongs to the HPrK/P family. Homohexamer. Requires Mg(2+) as cofactor.

It catalyses the reaction [HPr protein]-L-serine + ATP = [HPr protein]-O-phospho-L-serine + ADP + H(+). The enzyme catalyses [HPr protein]-O-phospho-L-serine + phosphate + H(+) = [HPr protein]-L-serine + diphosphate. Functionally, catalyzes the ATP- as well as the pyrophosphate-dependent phosphorylation of a specific serine residue in HPr, a phosphocarrier protein of the phosphoenolpyruvate-dependent sugar phosphotransferase system (PTS). HprK/P also catalyzes the pyrophosphate-producing, inorganic phosphate-dependent dephosphorylation (phosphorolysis) of seryl-phosphorylated HPr (P-Ser-HPr). The sequence is that of HPr kinase/phosphorylase from Verminephrobacter eiseniae (strain EF01-2).